We begin with the raw amino-acid sequence, 284 residues long: MPIYKPSELRLFLNQLGIFPKKGLSQNFLIDGNIIRKIVRASDVQPGNLVLEIGPGPGSLTQAMLEVEAHVVAVEKDFVLARELKRFQTPSKQLEIFCEDILMFSVEEELQSRLRDDQKAKVIANLPYHLTTPILAEMVVRRKLFSSLTVMVQEEVARRMTALPGQSDYSSFTIFLNFYSKPRYGFTVSRNCFYPAPKVDSAIVVLELKEPPPNIDAQVFFKITRTAFEQRRKMLRASLKSLFDPSKISNALEIIGQNPQARPEVLSLEDFIKLYHELYSSERH.

Residues Asn27, Leu29, Gly54, Glu75, Asp100, and Asn125 each coordinate S-adenosyl-L-methionine.

It belongs to the class I-like SAM-binding methyltransferase superfamily. rRNA adenine N(6)-methyltransferase family. RsmA subfamily.

The protein resides in the cytoplasm. It catalyses the reaction adenosine(1518)/adenosine(1519) in 16S rRNA + 4 S-adenosyl-L-methionine = N(6)-dimethyladenosine(1518)/N(6)-dimethyladenosine(1519) in 16S rRNA + 4 S-adenosyl-L-homocysteine + 4 H(+). Functionally, specifically dimethylates two adjacent adenosines (A1518 and A1519) in the loop of a conserved hairpin near the 3'-end of 16S rRNA in the 30S particle. May play a critical role in biogenesis of 30S subunits. This chain is Ribosomal RNA small subunit methyltransferase A, found in Protochlamydia amoebophila (strain UWE25).